The sequence spans 175 residues: Nucleoside-triphosphatase THEP1 (175 aa).

ATP contacts are provided by residues 8–15 (GSPGVGKS) and 99–106 (LVVIDEIG).

It belongs to the THEP1 NTPase family.

The catalysed reaction is a ribonucleoside 5'-triphosphate + H2O = a ribonucleoside 5'-diphosphate + phosphate + H(+). Its function is as follows. Has nucleotide phosphatase activity towards ATP, GTP, CTP, TTP and UTP. May hydrolyze nucleoside diphosphates with lower efficiency. The protein is Nucleoside-triphosphatase THEP1 of Methanosarcina acetivorans (strain ATCC 35395 / DSM 2834 / JCM 12185 / C2A).